The chain runs to 249 residues: Ubiquinone/menaquinone biosynthesis C-methyltransferase UbiE (249 aa).

Residues threonine 72, aspartate 93, and 121-122 (NA) each bind S-adenosyl-L-methionine.

The protein belongs to the class I-like SAM-binding methyltransferase superfamily. MenG/UbiE family.

It catalyses the reaction a 2-demethylmenaquinol + S-adenosyl-L-methionine = a menaquinol + S-adenosyl-L-homocysteine + H(+). It carries out the reaction a 2-methoxy-6-(all-trans-polyprenyl)benzene-1,4-diol + S-adenosyl-L-methionine = a 5-methoxy-2-methyl-3-(all-trans-polyprenyl)benzene-1,4-diol + S-adenosyl-L-homocysteine + H(+). It functions in the pathway quinol/quinone metabolism; menaquinone biosynthesis; menaquinol from 1,4-dihydroxy-2-naphthoate: step 2/2. Its pathway is cofactor biosynthesis; ubiquinone biosynthesis. In terms of biological role, methyltransferase required for the conversion of demethylmenaquinol (DMKH2) to menaquinol (MKH2) and the conversion of 2-polyprenyl-6-methoxy-1,4-benzoquinol (DDMQH2) to 2-polyprenyl-3-methyl-6-methoxy-1,4-benzoquinol (DMQH2). The polypeptide is Ubiquinone/menaquinone biosynthesis C-methyltransferase UbiE (Hahella chejuensis (strain KCTC 2396)).